A 762-amino-acid polypeptide reads, in one-letter code: ABC-type oligopeptide transporter ABCB9 (762 aa).

A run of 8 helical transmembrane segments spans residues 7–27 (VVVT…IYAF), 47–67 (VLDL…ATIG), 84–104 (LVIT…LLLF), 116–136 (FWAL…LWGL), 181–201 (VAFL…ETFL), 221–241 (FTTA…AAGI), 315–335 (VFMF…FPII), and 412–432 (SGLT…HLVI). The 284-residue stretch at 184 to 467 (LVAASFFLIV…VGSVYSGLMQ (284 aa)) folds into the ABC transmembrane type-1 domain. Positions 500 to 736 (VDFENVTFTY…GGLYAKLVQR (237 aa)) constitute an ABC transporter domain. An ATP-binding site is contributed by 535 to 542 (GPSGSGKS).

It belongs to the ABC transporter superfamily. ABCB family. MHC peptide exporter (TC 3.A.1.209) subfamily. In terms of assembly, homodimer. Interacts (via TMD0 region) with LAMP1; this interaction strongly stabilizes ABCB9 and protects ABCB9 against lysosomal degradation. Interacts (via TMD0 region) with LAMP2 (isoform LAMP-2B). Interacts (via TMD0) with YIF1B; this interaction allows (but is not essential) the ER-to-Golgi trafficking and strongly depends on a salt bridge within TMD0. In terms of tissue distribution, highly expressed in testis, particularly in the Sertoli cells of the seminiferous tubules, and at moderate levels in brain and spinal cord.

The protein localises to the lysosome membrane. It catalyses the reaction a [oligopeptide](in) + ATP + H2O = a [oligopeptide](out) + ADP + phosphate + H(+). ATP-dependent low-affinity peptide transporter which translocates a broad spectrum of peptides from the cytosol to the lysosomal lumen for degradation. Displays a broad peptide length specificity from 6-mer up to at least 59-mer peptides with an optimum of 23-mers. Binds and transports smaller and larger peptides with the same affinity. Favors positively charged, aromatic or hydrophobic residues in the N- and C-terminal positions whereas negatively charged residues as well as asparagine and methionine are not favored. In Mus musculus (Mouse), this protein is ABC-type oligopeptide transporter ABCB9.